Reading from the N-terminus, the 312-residue chain is Glyoxylate/hydroxypyruvate reductase A (312 aa).

The active site involves Arg-227. His-275 serves as the catalytic Proton donor.

This sequence belongs to the D-isomer specific 2-hydroxyacid dehydrogenase family. GhrA subfamily.

The protein localises to the cytoplasm. The catalysed reaction is glycolate + NADP(+) = glyoxylate + NADPH + H(+). It carries out the reaction (R)-glycerate + NAD(+) = 3-hydroxypyruvate + NADH + H(+). The enzyme catalyses (R)-glycerate + NADP(+) = 3-hydroxypyruvate + NADPH + H(+). Functionally, catalyzes the NADPH-dependent reduction of glyoxylate and hydroxypyruvate into glycolate and glycerate, respectively. This is Glyoxylate/hydroxypyruvate reductase A from Escherichia coli (strain UTI89 / UPEC).